The chain runs to 517 residues: Membrane-bound lytic murein transglycosylase F (517 aa).

The first 32 residues, 1 to 32 (MKKFKINYLLIGIVTLLLAAALWPSIPWFGKA), serve as a signal peptide directing secretion. Residues 33–269 (ENRIAAIQSR…RLEEKYLGHG (237 aa)) form a non-LT domain region. Residues 270–517 (GDFDYVDTRS…PNTLVQAPRR (248 aa)) form an LT domain region. Glu-314 is a catalytic residue.

In the N-terminal section; belongs to the bacterial solute-binding protein 3 family. The protein in the C-terminal section; belongs to the transglycosylase Slt family.

The protein resides in the cell outer membrane. The enzyme catalyses Exolytic cleavage of the (1-&gt;4)-beta-glycosidic linkage between N-acetylmuramic acid (MurNAc) and N-acetylglucosamine (GlcNAc) residues in peptidoglycan, from either the reducing or the non-reducing ends of the peptidoglycan chains, with concomitant formation of a 1,6-anhydrobond in the MurNAc residue.. Functionally, murein-degrading enzyme that degrades murein glycan strands and insoluble, high-molecular weight murein sacculi, with the concomitant formation of a 1,6-anhydromuramoyl product. Lytic transglycosylases (LTs) play an integral role in the metabolism of the peptidoglycan (PG) sacculus. Their lytic action creates space within the PG sacculus to allow for its expansion as well as for the insertion of various structures such as secretion systems and flagella. The sequence is that of Membrane-bound lytic murein transglycosylase F from Enterobacter sp. (strain 638).